A 329-amino-acid chain; its full sequence is MATGQKLMRAVRVFEFGGPEVLKLQSDIAVPIPKDHQALIKVHACGVNPVETYIRSGTYSRKPLLPYTPGSDVAGVIEAVGGNASAFKKGDRVFTSSTISGGYAEYALAADHTVYKLPEKLDFKQGAAIGIPYFTAYRALIHSAHVKAGESVLVHGASGGVGLAACQIARAYGLKVLGTAGTEEGQKIVLQNGAHEVFNHREVNYIDKIKKYVGEKGIDVIIEMLANVNLNKDLSLLSHGGQVIVVGSRGTIEINPRDTMAKESSIIGVTVFSSTKEEFQQYAAALQAGMEIGWLKPVIGSQYPLEKVAEAHENIIHGSGATGKMILLL.

A2 bears the N-acetylalanine mark. K23 bears the N6-acetyllysine mark. NADP(+) is bound by residues Y53, 158 to 161, G181, H200, N229, 246 to 249, and 269 to 271; these read SGGV, VGSR, and VTV. S248 carries the post-translational modification Phosphoserine. Residue K296 is modified to N6-succinyllysine.

Belongs to the zinc-containing alcohol dehydrogenase family. Quinone oxidoreductase subfamily. In terms of assembly, homotetramer.

Its subcellular location is the cytoplasm. The catalysed reaction is 2 a quinone + NADPH + H(+) = 2 a 1,4-benzosemiquinone + NADP(+). Functionally, does not have alcohol dehydrogenase activity. Binds NADP and acts through a one-electron transfer process. Orthoquinones, such as 1,2-naphthoquinone or 9,10-phenanthrenequinone, are the best substrates (in vitro). May act in the detoxification of xenobiotics. Interacts with (AU)-rich elements (ARE) in the 3'-UTR of target mRNA species and enhances their stability. NADPH binding interferes with mRNA binding. The sequence is that of Quinone oxidoreductase (CRYZ) from Pongo abelii (Sumatran orangutan).